Here is an 898-residue protein sequence, read N- to C-terminus: Cip1-interacting zinc finger protein (898 aa).

Disordered stretches follow at residues 48–69, 157–305, and 318–471; these read QAPL…QPLL, QSLL…ALEA, and VQAQ…QPQV. Over residues 170-203 the composition is skewed to polar residues; that stretch reads NPSQFNLSGRNPQKQARTSSSTTPNRKDSSSQTM. At Ser209 the chain carries Phosphoserine. Residue Thr244 is modified to Phosphothreonine. Residues 263-273 are compositionally biased toward basic and acidic residues; that stretch reads RSSEEPTEKEP. A Glycyl lysine isopeptide (Lys-Gly) (interchain with G-Cter in SUMO2) cross-link involves residue Lys280. The span at 318 to 327 shows a compositional bias: low complexity; it reads VQAQVQSQTQ. Residues 328-351 are compositionally biased toward polar residues; sequence PRIPSTDTQVQPKLQKQAQTQTSP. Lys340 is covalently cross-linked (Glycyl lysine isopeptide (Lys-Gly) (interchain with G-Cter in SUMO2)). Ser350 bears the Phosphoserine mark. Over residues 355-383 the composition is skewed to low complexity; sequence VLQQKQVQPQLQQEAEPQKQVQPQVQPQA. A compositionally biased stretch (polar residues) spans 384–395; the sequence is HSQGPRQVQLQQ. A Glycyl lysine isopeptide (Lys-Gly) (interchain with G-Cter in SUMO2) cross-link involves residue Lys401. Positions 402–435 are enriched in low complexity; the sequence is QVQPQVQPQAHSQPPRQVQLQLQKQVQTQTYPQV. The span at 436-445 shows a compositional bias: polar residues; it reads HTQAQPSVQP. The residue at position 547 (Ser547) is a Phosphoserine. A Glycyl lysine isopeptide (Lys-Gly) (interchain with G-Cter in SUMO2) cross-link involves residue Lys549. The tract at residues 562 to 584 is disordered; the sequence is STVPLTPVPRPSDSVSSTPAATS. Thr567 is modified (phosphothreonine). Low complexity predominate over residues 572–584; it reads PSDSVSSTPAATS. Residues Lys588, Lys680, and Lys705 each participate in a glycyl lysine isopeptide (Lys-Gly) (interchain with G-Cter in SUMO2) cross-link. A Matrin-type zinc finger spans residues 799–830; the sequence is YICRICHKFYHSNSGAQLSHCKSLGHFENLQK. Ser821 carries the phosphoserine modification. Lys830 is covalently cross-linked (Glycyl lysine isopeptide (Lys-Gly) (interchain with G-Cter in SUMO2)). Phosphoserine is present on Ser838. Residues 859–879 show a composition bias toward polar residues; the sequence is LFTSSGRPPSQPNTQDKTPSK. The disordered stretch occupies residues 859–898; it reads LFTSSGRPPSQPNTQDKTPSKVTARPSQPPLPRRSTRLKT. Lys879 participates in a covalent cross-link: Glycyl lysine isopeptide (Lys-Gly) (interchain with G-Cter in SUMO2).

As to quaternary structure, interacts with CIP/WAF1.

Its subcellular location is the nucleus. Its function is as follows. May regulate the subcellular localization of CIP/WAF1. The chain is Cip1-interacting zinc finger protein (CIZ1) from Homo sapiens (Human).